Here is a 184-residue protein sequence, read N- to C-terminus: Photosystem I assembly protein Ycf4 (184 aa).

A run of 2 helical transmembrane segments spans residues 21 to 43 (NFCW…ISSY) and 58 to 80 (LFFP…SSYL).

This sequence belongs to the Ycf4 family.

The protein resides in the plastid. Its subcellular location is the chloroplast thylakoid membrane. Seems to be required for the assembly of the photosystem I complex. The polypeptide is Photosystem I assembly protein Ycf4 (Carpobrotus chilensis (Sea fig)).